The primary structure comprises 345 residues: Fructose-1,6-bisphosphatase class 1 1 (345 aa).

Mg(2+)-binding residues include glutamate 90, aspartate 109, leucine 111, and aspartate 112. Substrate contacts are provided by residues 112 to 115 (DGSS) and asparagine 200. Glutamate 272 lines the Mg(2+) pocket.

This sequence belongs to the FBPase class 1 family. Homotetramer. It depends on Mg(2+) as a cofactor.

It localises to the cytoplasm. The catalysed reaction is beta-D-fructose 1,6-bisphosphate + H2O = beta-D-fructose 6-phosphate + phosphate. It functions in the pathway carbohydrate biosynthesis; gluconeogenesis. The polypeptide is Fructose-1,6-bisphosphatase class 1 1 (Nitrobacter hamburgensis (strain DSM 10229 / NCIMB 13809 / X14)).